The chain runs to 382 residues: uncharacterized protein (382 aa).

Transmembrane regions (helical) follow at residues 8-28 (VMLL…LNTL), 45-65 (MVSS…GYLI), 75-95 (YLAS…VGFW), 102-122 (FIAG…LMCS), 131-151 (LLAA…LLVS), 157-177 (LLHV…PLLF), 204-224 (LGVN…GLMP), 231-251 (GMAN…GILG), 270-290 (VQVF…AMAP), 291-311 (ALFI…AWAC), 325-345 (ALLL…AMLM), and 349-369 (SDNL…LMLL).

Belongs to the major facilitator superfamily. YcaD (TC 2.A.1.26) family.

It is found in the cell inner membrane. This is an uncharacterized protein from Salmonella enteritidis PT4 (strain P125109).